We begin with the raw amino-acid sequence, 151 residues long: UPF0178 protein GSU0171 (151 aa).

It belongs to the UPF0178 family.

The protein is UPF0178 protein GSU0171 of Geobacter sulfurreducens (strain ATCC 51573 / DSM 12127 / PCA).